Reading from the N-terminus, the 344-residue chain is Aspartate-semialdehyde dehydrogenase (344 aa).

Residues 10-13 and 38-39 contribute to the NADP(+) site; these read TGQV and RS. Residue arginine 101 participates in phosphate binding. Cysteine 131 acts as the Acyl-thioester intermediate in catalysis. Residue glutamine 158 participates in substrate binding. 161–162 is a binding site for NADP(+); the sequence is SG. Position 228 (lysine 228) interacts with phosphate. Position 250 (arginine 250) interacts with substrate. The Proton acceptor role is filled by histidine 257. Residue asparagine 326 coordinates NADP(+).

Belongs to the aspartate-semialdehyde dehydrogenase family. Homodimer.

The catalysed reaction is L-aspartate 4-semialdehyde + phosphate + NADP(+) = 4-phospho-L-aspartate + NADPH + H(+). It participates in amino-acid biosynthesis; L-lysine biosynthesis via DAP pathway; (S)-tetrahydrodipicolinate from L-aspartate: step 2/4. The protein operates within amino-acid biosynthesis; L-methionine biosynthesis via de novo pathway; L-homoserine from L-aspartate: step 2/3. It functions in the pathway amino-acid biosynthesis; L-threonine biosynthesis; L-threonine from L-aspartate: step 2/5. Functionally, catalyzes the NADPH-dependent formation of L-aspartate-semialdehyde (L-ASA) by the reductive dephosphorylation of L-aspartyl-4-phosphate. This is Aspartate-semialdehyde dehydrogenase from Corynebacterium melassecola.